Consider the following 188-residue polypeptide: ATP synthase subunit p18, mitochondrial (188 aa).

The transit peptide at M1–F18 directs the protein to the mitochondrion. 3 PPR repeats span residues T36 to I70, A75 to H109, and N116 to E146.

In terms of assembly, F-type ATPases have 2 components, F(1) - the catalytic core - and F(o) - the membrane proton channel. F(1) has five subunits: alpha(3), beta(3), gamma(1), delta(1), epsilon(1), plus the additional subunit P18 (Tb427.05.1710) that is not present in F(1)F(o) ATP synthase from metazoa. Subunit P18 (Tb927.5.1710) interacts with the alpha subunit with a 1:1 stoichiometry; the interaction is direct. Subunit gamma is part of the central stalk. F(o) has three main subunits: a, b and c. The trypanosomal ATPase complex contains additional subunits that are not present in the F(1)F(o) ATP synthase from metazoa.

The protein resides in the mitochondrion. The protein localises to the mitochondrion inner membrane. In terms of biological role, mitochondrial membrane ATP synthase (F(1)F(o) ATP synthase) produces ATP from ADP in the presence of a proton gradient across the membrane which is generated by electron transport complexes of the respiratory chain. F-type ATPases consist of two structural domains, F(1) - containing the extramembraneous catalytic core, and F(o) - containing the membrane proton channel, linked together by a central stalk and a peripheral stalk. During catalysis, ATP synthesis in the catalytic domain of F(1) is coupled via a rotary mechanism of the central stalk subunits to proton translocation. Subunits alpha and beta form the catalytic core in F(1). Rotation of the central stalk against the surrounding alpha(3)beta(3) subunits leads to hydrolysis of ATP in three separate catalytic sites on the beta subunits. Contrary to the procyclic, insect form that requires F(1)F(o) ATP synthase for ATP synthesis, the bloodstream form relies on ATP hydrolysis by F(1)F(o) ATP synthase to maintain its mitochondrial membrane potential. The protein is ATP synthase subunit p18, mitochondrial of Trypanosoma brucei brucei.